The following is a 310-amino-acid chain: ADP-L-glycero-D-manno-heptose-6-epimerase (310 aa).

Residues 10–11 (FI), 31–32 (DN), Lys-38, Lys-53, 75–79 (EGACS), and Asn-92 each bind NADP(+). The active-site Proton acceptor is Tyr-140. Residue Lys-144 coordinates NADP(+). Asn-169 serves as a coordination point for substrate. NADP(+)-binding residues include Val-170 and Lys-178. Lys-178 (proton acceptor) is an active-site residue. Substrate is bound by residues Ser-180, His-187, 201-204 (FEGS), Arg-209, and Tyr-272.

Belongs to the NAD(P)-dependent epimerase/dehydratase family. HldD subfamily. As to quaternary structure, homopentamer. NADP(+) serves as cofactor.

The catalysed reaction is ADP-D-glycero-beta-D-manno-heptose = ADP-L-glycero-beta-D-manno-heptose. It functions in the pathway nucleotide-sugar biosynthesis; ADP-L-glycero-beta-D-manno-heptose biosynthesis; ADP-L-glycero-beta-D-manno-heptose from D-glycero-beta-D-manno-heptose 7-phosphate: step 4/4. In terms of biological role, catalyzes the interconversion between ADP-D-glycero-beta-D-manno-heptose and ADP-L-glycero-beta-D-manno-heptose via an epimerization at carbon 6 of the heptose. This is ADP-L-glycero-D-manno-heptose-6-epimerase from Citrobacter koseri (strain ATCC BAA-895 / CDC 4225-83 / SGSC4696).